Here is a 155-residue protein sequence, read N- to C-terminus: uncharacterized protein (155 aa).

This is an uncharacterized protein from Autographa californica nuclear polyhedrosis virus (AcMNPV).